Here is a 129-residue protein sequence, read N- to C-terminus: Glycine cleavage system H protein (129 aa).

Residues 24-106 (LVRVGISAFA…HGEGWLLVLR (83 aa)) form the Lipoyl-binding domain. Lys65 is modified (N6-lipoyllysine).

The protein belongs to the GcvH family. In terms of assembly, the glycine cleavage system is composed of four proteins: P, T, L and H. Requires (R)-lipoate as cofactor.

In terms of biological role, the glycine cleavage system catalyzes the degradation of glycine. The H protein shuttles the methylamine group of glycine from the P protein to the T protein. This is Glycine cleavage system H protein from Synechococcus sp. (strain CC9605).